The following is a 598-amino-acid chain: Membrane protein insertase YidC (598 aa).

Residues 7 to 27 (NYFIAIALSVLIVLGWQFLYM) form a helical membrane-spanning segment. Residues 37-76 (AQEAQKAQQQTEQVQQPAAGGQTPAQTSGAAPSGQAAATA) form a disordered region. Residues 40-76 (AQKAQQQTEQVQQPAAGGQTPAQTSGAAPSGQAAATA) show a composition bias toward low complexity. The next 4 helical transmembrane spans lie at 377 to 397 (FGVA…PLAS), 447 to 467 (WPVA…YITI), 492 to 512 (LFGL…WPLI), and 538 to 558 (WMPL…VIYW).

The protein belongs to the OXA1/ALB3/YidC family. Type 1 subfamily. In terms of assembly, interacts with the Sec translocase complex via SecD. Specifically interacts with transmembrane segments of nascent integral membrane proteins during membrane integration.

It is found in the cell inner membrane. In terms of biological role, required for the insertion and/or proper folding and/or complex formation of integral membrane proteins into the membrane. Involved in integration of membrane proteins that insert both dependently and independently of the Sec translocase complex, as well as at least some lipoproteins. Aids folding of multispanning membrane proteins. This Rhizobium johnstonii (strain DSM 114642 / LMG 32736 / 3841) (Rhizobium leguminosarum bv. viciae) protein is Membrane protein insertase YidC.